Consider the following 436-residue polypeptide: Chromosomal replication initiator protein DnaA (436 aa).

The interval 1 to 69 (MLADEILELL…AYLYEVKTGK (69 aa)) is domain I, interacts with DnaA modulators. The interval 69-99 (KKPEVEITSQTKLKNIKQNQVNVKQIKAQSS) is domain II. The tract at residues 100–314 (ILNPGYTFEN…GAIINLNAYA (215 aa)) is domain III, AAA+ region. The ATP site is built by glycine 144, glycine 146, lysine 147, and threonine 148. The segment at 315-436 (SLMRVEITLE…EIKNKILTKG (122 aa)) is domain IV, binds dsDNA.

The protein belongs to the DnaA family. In terms of assembly, oligomerizes as a right-handed, spiral filament on DNA at oriC.

It is found in the cytoplasm. Functionally, plays an essential role in the initiation and regulation of chromosomal replication. ATP-DnaA binds to the origin of replication (oriC) to initiate formation of the DNA replication initiation complex once per cell cycle. Binds the DnaA box (a 9 base pair repeat at the origin) and separates the double-stranded (ds)DNA. Forms a right-handed helical filament on oriC DNA; dsDNA binds to the exterior of the filament while single-stranded (ss)DNA is stabiized in the filament's interior. The ATP-DnaA-oriC complex binds and stabilizes one strand of the AT-rich DNA unwinding element (DUE), permitting loading of DNA polymerase. After initiation quickly degrades to an ADP-DnaA complex that is not apt for DNA replication. Binds acidic phospholipids. This Campylobacter concisus (strain 13826) protein is Chromosomal replication initiator protein DnaA.